The sequence spans 256 residues: MSAALFSLDGPARGAPWTAEPAAFYEPGRAGKPGRGAEPAASAMYDDESAIDFSAYIDSMAAVPTLELCHDELFADLFNSNHKAGALELLPGGPARLGGPGPAPRPLKREPDWGDGDAPGSLLPAQVAACAQTVVSLAAAAQPTPPASPEPPRRSPAPPAPGPARDKAAGKRGPDRGSPEYRQRRERNNIAVRKSRDKAKRRNQEMQQKLVELSAENEKLQQRVEQLTRDLAGLRRFFKQLPGAPFLPGAGAADAR.

Ser2 bears the N-acetylserine mark. 3 disordered regions span residues 18–40, 92–121, and 139–206; these read TAEP…AEPA, GGPA…APGS, and AAAQ…NQEM. Lys108 is covalently cross-linked (Glycyl lysine isopeptide (Lys-Gly) (interchain with G-Cter in SUMO)). A compositionally biased stretch (pro residues) spans 143–162; the sequence is PTPPASPEPPRRSPAPPAPG. Residues 164-188 are compositionally biased toward basic and acidic residues; it reads ARDKAAGKRGPDRGSPEYRQRRERN. Residues 178–241 form the bZIP domain; the sequence is SPEYRQRRER…AGLRRFFKQL (64 aa). The basic motif stretch occupies residues 182 to 209; sequence RQRRERNNIAVRKSRDKAKRRNQEMQQK. Residues 213 to 241 are leucine-zipper; the sequence is LSAENEKLQQRVEQLTRDLAGLRRFFKQL.

This sequence belongs to the bZIP family. C/EBP subfamily. In terms of assembly, binds DNA as a homodimer and as a heterodimer. Can form stable heterodimers with CEBPB. Can form stable heterodimers with CEBPA and CEBPE. Directly interacts with SPI1/PU.1; this interaction does not affect DNA-binding properties of each partner. Interacts with PRDM16.

It localises to the nucleus. Transcription activator that recognizes two different DNA motifs: the CCAAT homology common to many promoters and the enhanced core homology common to many enhancers. Important transcription factor regulating the expression of genes involved in immune and inflammatory responses. Transcriptional activator that enhances IL6 transcription alone and as heterodimer with CEBPB. This chain is CCAAT/enhancer-binding protein delta (CEBPD), found in Bos taurus (Bovine).